The primary structure comprises 481 residues: Zinc metalloproteinase/disintegrin (481 aa).

The N-terminal stretch at 1–20 is a signal peptide; the sequence is MIQVLLVTICLAVFPYQGSS. The propeptide occupies 21–190; the sequence is IILESGNVDD…KASQLYLTPE (170 aa). The Peptidase M12B domain maps to 197–392; it reads RHIELAIVVD…KKPQCILNAP (196 aa). Positions 200 and 284 each coordinate Ca(2+). 3 disulfides stabilise this stretch: C308–C387, C349–C371, and C351–C354. H333 is a Zn(2+) binding site. E334 is an active-site residue. Residues H337 and H343 each coordinate Zn(2+). Positions 387 and 390 each coordinate Ca(2+). Residues 393 to 410 constitute a propeptide that is removed on maturation; the sequence is LRTDTVSTPISGNEFLEA. One can recognise a Disintegrin domain in the interval 400 to 481; that stretch reads TPISGNEFLE…ADCPRNGLYG (82 aa). Intrachain disulfides connect C414/C429, C416/C424, C423/C446, C437/C443, C442/C467, and C455/C474. A Cell attachment site motif is present at residues 459-461; that stretch reads RGD.

This sequence belongs to the venom metalloproteinase (M12B) family. P-II subfamily. P-IIa sub-subfamily. Monomer. Requires Zn(2+) as cofactor. Expressed by the venom gland.

The protein localises to the secreted. Functionally, impairs hemostasis in the envenomed animal. Its function is as follows. Inhibits platelet aggregation induced by ADP and collagen. Acts by inhibiting fibrinogen interaction with platelet receptors GPIIb/GPIIIa (ITGA2B/ITGB3). Has antitumor-growth activity. This Protobothrops jerdonii (Jerdon's pitviper) protein is Zinc metalloproteinase/disintegrin.